Here is a 212-residue protein sequence, read N- to C-terminus: Thymidylate kinase (212 aa).

Residue 7–14 coordinates ATP; that stretch reads GIEGSGKS.

This sequence belongs to the thymidylate kinase family.

It carries out the reaction dTMP + ATP = dTDP + ADP. Functionally, phosphorylation of dTMP to form dTDP in both de novo and salvage pathways of dTTP synthesis. The protein is Thymidylate kinase of Oleidesulfovibrio alaskensis (strain ATCC BAA-1058 / DSM 17464 / G20) (Desulfovibrio alaskensis).